Reading from the N-terminus, the 136-residue chain is MTHRAVPCQPRAFSKIKVLVISFLFLMVAFLPFSSHGKLQEQIASYVSWKLETRAIHRFGGCNFAHQMQRNGIQRKIVCSDLERGNNTGMNACMQLVLSDLVARRVLLKTVHVHPWHLDGISGAFSVCCKDATEVS.

Positions 1-35 are cleaved as a signal peptide; it reads MTHRAVPCQPRAFSKIKVLVISFLFLMVAFLPFSS.

This is an uncharacterized protein from Saccharomyces cerevisiae (strain ATCC 204508 / S288c) (Baker's yeast).